The primary structure comprises 509 residues: ATP synthase subunit alpha (509 aa).

169–176 (GDRQTGKT) is an ATP binding site.

Belongs to the ATPase alpha/beta chains family. F-type ATPases have 2 components, CF(1) - the catalytic core - and CF(0) - the membrane proton channel. CF(1) has five subunits: alpha(3), beta(3), gamma(1), delta(1), epsilon(1). CF(0) has four main subunits: a(1), b(1), b'(1) and c(9-12).

It localises to the cell inner membrane. The catalysed reaction is ATP + H2O + 4 H(+)(in) = ADP + phosphate + 5 H(+)(out). In terms of biological role, produces ATP from ADP in the presence of a proton gradient across the membrane. The alpha chain is a regulatory subunit. This is ATP synthase subunit alpha from Erythrobacter litoralis (strain HTCC2594).